The sequence spans 336 residues: Lipoyl synthase (336 aa).

[4Fe-4S] cluster is bound by residues cysteine 81, cysteine 86, cysteine 92, cysteine 107, cysteine 111, cysteine 114, and serine 323. Residues 93 to 312 (FGHGTATFMI…EDYGYELGFS (220 aa)) enclose the Radical SAM core domain.

It belongs to the radical SAM superfamily. Lipoyl synthase family. Requires [4Fe-4S] cluster as cofactor.

It is found in the cytoplasm. The catalysed reaction is [[Fe-S] cluster scaffold protein carrying a second [4Fe-4S](2+) cluster] + N(6)-octanoyl-L-lysyl-[protein] + 2 oxidized [2Fe-2S]-[ferredoxin] + 2 S-adenosyl-L-methionine + 4 H(+) = [[Fe-S] cluster scaffold protein] + N(6)-[(R)-dihydrolipoyl]-L-lysyl-[protein] + 4 Fe(3+) + 2 hydrogen sulfide + 2 5'-deoxyadenosine + 2 L-methionine + 2 reduced [2Fe-2S]-[ferredoxin]. It participates in protein modification; protein lipoylation via endogenous pathway; protein N(6)-(lipoyl)lysine from octanoyl-[acyl-carrier-protein]: step 2/2. Its function is as follows. Catalyzes the radical-mediated insertion of two sulfur atoms into the C-6 and C-8 positions of the octanoyl moiety bound to the lipoyl domains of lipoate-dependent enzymes, thereby converting the octanoylated domains into lipoylated derivatives. This Stenotrophomonas maltophilia (strain K279a) protein is Lipoyl synthase.